The chain runs to 256 residues: Small ribosomal subunit protein uS2 (256 aa).

Residues 229–256 are disordered; it reads PVDDNGDYGDFDEAIDEYADETDASESE. Acidic residues predominate over residues 232–256; sequence DNGDYGDFDEAIDEYADETDASESE.

It belongs to the universal ribosomal protein uS2 family.

The chain is Small ribosomal subunit protein uS2 from Picosynechococcus sp. (strain ATCC 27264 / PCC 7002 / PR-6) (Agmenellum quadruplicatum).